The chain runs to 284 residues: Putative ABC transporter ATP-binding protein tll2439 (284 aa).

Positions 6–242 constitute an ABC transporter domain; it reads LEFHQVGFRY…WPTFAPELGT (237 aa). 40–47 contacts ATP; the sequence is GLNGSGKS.

It belongs to the ABC transporter superfamily.

It is found in the cell inner membrane. In terms of biological role, probably part of an ABC transporter complex. Responsible for energy coupling to the transport system. This is Putative ABC transporter ATP-binding protein tll2439 from Thermosynechococcus vestitus (strain NIES-2133 / IAM M-273 / BP-1).